Here is a 659-residue protein sequence, read N- to C-terminus: DNA ligase (659 aa).

NAD(+) is bound by residues 32-36, 81-82, and glutamate 110; these read DQQYD and SL. Lysine 112 serves as the catalytic N6-AMP-lysine intermediate. Residues arginine 133, glutamate 167, lysine 282, and lysine 306 each coordinate NAD(+). The Zn(2+) site is built by cysteine 399, cysteine 402, cysteine 415, and cysteine 420. Residues 582 to 659 form the BRCT domain; sequence IKNNIFKNKK…QEHEFEELIK (78 aa).

It belongs to the NAD-dependent DNA ligase family. LigA subfamily. Mg(2+) is required as a cofactor. It depends on Mn(2+) as a cofactor.

The catalysed reaction is NAD(+) + (deoxyribonucleotide)n-3'-hydroxyl + 5'-phospho-(deoxyribonucleotide)m = (deoxyribonucleotide)n+m + AMP + beta-nicotinamide D-nucleotide.. In terms of biological role, DNA ligase that catalyzes the formation of phosphodiester linkages between 5'-phosphoryl and 3'-hydroxyl groups in double-stranded DNA using NAD as a coenzyme and as the energy source for the reaction. It is essential for DNA replication and repair of damaged DNA. The sequence is that of DNA ligase from Phytoplasma mali (strain AT).